A 582-amino-acid chain; its full sequence is MANQIDESKPISDLEIMRHSAAHIMAEAVLSMFPEAKLGIGPAIDTGFYYDFDLPRTLTPEDLPEIETRMNQLVKSNLPFRREEMSKDEARKLFANQPYKLELLNDITDETVSIYRQGNFCDLCRGPHVNYTSKVKAFKLLSIAGAYWRGDEKRPMLQRIYGAAFLDKASLAEYLNMLEEAAKRDHRKLGKELELFSLHQEIGGGLVNWLPNGAIVRHLIEEFWKKEHLKRGYDLVYTPHIAKVDLWKTSGHWGFYRENMYSPMDIDGEEYVLKPMNCVYHILMFKNRTRSYKELPIRMAELGTVYRYERSGVLHGLSRVRGFTQDDAHIFCLYDQLEKEVVKVLDLAKFMIDTFGFTKYKVMLSTRPEKYVGELDKWEYATDILAKALEANQIPYQVDPGEGVFYGPKIDIKFEDALGRAWQGPTIQVDFQLPERFDVSVVGEDGKDQPVAMVHRTVLGSMERFMSCLTEQYGGAFPAWLSPKQAMVIPIADRHTEFAEKLACELREEEVRVEVDSRSETMNQKIRQAQLAKIPYMLVVGDKEIETQSVAVRTRTGSQQVMPFAEFKSMLLAKIKTKSTEI.

A catalytic region spans residues 185 to 478 (DHRKLGKELE…LTEQYGGAFP (294 aa)). Positions 278, 329, and 455 each coordinate Zn(2+).

The protein belongs to the class-II aminoacyl-tRNA synthetase family. Homodimer. It depends on Zn(2+) as a cofactor.

The protein localises to the cytoplasm. It catalyses the reaction tRNA(Thr) + L-threonine + ATP = L-threonyl-tRNA(Thr) + AMP + diphosphate + H(+). Its function is as follows. Catalyzes the attachment of threonine to tRNA(Thr) in a two-step reaction: L-threonine is first activated by ATP to form Thr-AMP and then transferred to the acceptor end of tRNA(Thr). Also edits incorrectly charged L-seryl-tRNA(Thr). This Dehalococcoides mccartyi (strain ATCC BAA-2100 / JCM 16839 / KCTC 5957 / BAV1) protein is Threonine--tRNA ligase.